Here is a 259-residue protein sequence, read N- to C-terminus: Proteasome subunit alpha (259 aa).

The tract at residues 226–259 (LAEGSATSATSATPGEAEAPATAPEGDVDTGSNG) is disordered. The segment covering 227-250 (AEGSATSATSATPGEAEAPATAPE) has biased composition (low complexity).

This sequence belongs to the peptidase T1A family. As to quaternary structure, the 20S proteasome core is composed of 14 alpha and 14 beta subunits that assemble into four stacked heptameric rings, resulting in a barrel-shaped structure. The two inner rings, each composed of seven catalytic beta subunits, are sandwiched by two outer rings, each composed of seven alpha subunits. The catalytic chamber with the active sites is on the inside of the barrel. Has a gated structure, the ends of the cylinder being occluded by the N-termini of the alpha-subunits. Is capped by the proteasome-associated ATPase, ARC.

It localises to the cytoplasm. The protein operates within protein degradation; proteasomal Pup-dependent pathway. Its activity is regulated as follows. The formation of the proteasomal ATPase ARC-20S proteasome complex, likely via the docking of the C-termini of ARC into the intersubunit pockets in the alpha-rings, may trigger opening of the gate for substrate entry. Interconversion between the open-gate and close-gate conformations leads to a dynamic regulation of the 20S proteasome proteolysis activity. Component of the proteasome core, a large protease complex with broad specificity involved in protein degradation. In Streptosporangium roseum (strain ATCC 12428 / DSM 43021 / JCM 3005 / KCTC 9067 / NCIMB 10171 / NRRL 2505 / NI 9100), this protein is Proteasome subunit alpha.